We begin with the raw amino-acid sequence, 5209 residues long: E3 ubiquitin-protein ligase rnf213-alpha (5209 aa).

Polar residues-rich tracts occupy residues 27–52 and 61–72; these read SQSY…QITN and ESKSLEIQNANV. Residues 27–373 are disordered; sequence SQSYETTQGT…KRNTRSTQHI (347 aa). The span at 85–101 shows a compositional bias: basic residues; sequence PKKKKRKKRKKEKKKKS. A compositionally biased stretch (low complexity) spans 108 to 118; that stretch reads SSLTSDLSDIS. Positions 119–128 are enriched in basic and acidic residues; sequence LTDKEKKMDT. 2 stretches are compositionally biased toward polar residues: residues 167-177 and 184-195; these read LSASALTTGSS and IGTTQKPVSASA. Basic and acidic residues predominate over residues 205-218; it reads QTKEEKVKCKDEGQ. The segment covering 219–243 has biased composition (polar residues); it reads KSLSAKAQHTPNANVDQNANVQSDA. Residues 256 to 269 are compositionally biased toward low complexity; sequence KSSSVKTKPSKSTV. Basic and acidic residues-rich tracts occupy residues 271-288 and 330-352; these read DPKK…RDNE and MKVE…SKES. ATP is bound by residues 2036 to 2041, Glu-2135, Asp-2193, Arg-2252, Lys-2535, and Ser-2610; that span reads GVGKSL. Cys-4005, Cys-4008, Cys-4020, His-4022, Cys-4025, Cys-4028, Cys-4040, Cys-4043, Cys-4507, and His-4511 together coordinate Zn(2+). Residues 4005-4043 form an RING-type zinc finger; that stretch reads CPVCMGDPRDPLSLPCDHIYCLTCIRQWLVPGQMHCPLC. The RZ-type zinc-finger motif lies at 4487–4557; it reads MPDDMLAVAQ…MQIQADRTQS (71 aa). Catalysis depends on Cys-4518, which acts as the Nucleophile; for E3 ubiquitin-lipopolysaccharide ligase activity. 2 residues coordinate Zn(2+): Cys-4527 and Cys-4530.

This sequence belongs to the AAA ATPase family.

Its subcellular location is the cytoplasm. The protein resides in the cytosol. It localises to the lipid droplet. It carries out the reaction S-ubiquitinyl-[E2 ubiquitin-conjugating enzyme]-L-cysteine + [acceptor protein]-L-lysine = [E2 ubiquitin-conjugating enzyme]-L-cysteine + N(6)-ubiquitinyl-[acceptor protein]-L-lysine.. It catalyses the reaction ATP + H2O = ADP + phosphate + H(+). The protein operates within protein modification; protein ubiquitination. Atypical E3 ubiquitin ligase that can catalyze ubiquitination of both proteins and lipids, and which is involved in various processes, such as lipid metabolism, angiogenesis and cell-autonomous immunity. Acts as a key immune sensor by catalyzing ubiquitination of the lipid A moiety of bacterial lipopolysaccharide (LPS) via its RZ-type zinc-finger: restricts the proliferation of cytosolic bacteria, such as Salmonella, by generating the bacterial ubiquitin coat through the ubiquitination of LPS. Ubiquitination of LPS triggers cell-autonomous immunity, such as antibacterial autophagy, leading to degradation of the microbial invader. Involved in lipid metabolism by regulating fat storage and lipid droplet formation; act by inhibiting the lipolytic process. Also regulates lipotoxicity by inhibiting desaturation of fatty acids. Also acts as an E3 ubiquitin-protein ligase via its RING-type zinc finger. Involved in the non-canonical Wnt signaling pathway in vascular development: acts by mediating ubiquitination and degradation of proteins downstream of rspo3, leading to inhibit the non-canonical Wnt signaling pathway and promoting vessel regression. Also has ATPase activity; ATPase activity is required for ubiquitination of LPS. Also involved in neuromuscular regulation. This chain is E3 ubiquitin-protein ligase rnf213-alpha, found in Danio rerio (Zebrafish).